A 3491-amino-acid polypeptide reads, in one-letter code: Erythronolide synthase EryA1 (3491 aa).

A loading domain region spans residues 1–484 (MSGPRSRTTS…TPRALAEALA (484 aa)). The interval 57 to 372 (VFVFPGQGAQ…AAQAFTGGVA (316 aa)) is acyltransferase 1. The active-site Acyl-ester intermediate; for acyltransferase 1 activity is the Ser145. The interval 386–410 (PALCRSSRRPRRKTSRPSPASTGTR) is disordered. Residues 391–400 (SSRRPRRKTS) are compositionally biased toward basic residues. The Carrier 1 domain occupies 412–487 (RTCCERLLAV…ALAEALAAGT (76 aa)). Ser447 carries the O-(pantetheine 4'-phosphoryl)serine modification. The 425-residue stretch at 504-928 (GEPVAVVAMA…GTNAHAIIEE (425 aa)) folds into the Ketosynthase family 3 (KS3) 1 domain. 2 module regions span residues 507-1958 (VAVV…AHLA) and 1982-3404 (IAIV…GFLD). The Acyl-thioester intermediate; for beta-ketoacyl synthase 1 activity role is filled by Cys677. Residues His812 and His850 each act as for beta-ketoacyl synthase 1 activity in the active site. Residues 1031–1352 (VFVFPGQGWQ…ALSRAFAAGV (322 aa)) are acyltransferase 2. Catalysis depends on Ser1128, which acts as the Acyl-ester intermediate; for acyltransferase 2 activity. The beta-ketoacyl reductase 1 stretch occupies residues 1613 to 1790 (GTVLVTGGTG…ATAVAWGTWA (178 aa)). NADP(+) contacts are provided by residues 1621-1624 (TGGV), 1644-1647 (SRSG), 1673-1674 (DV), Lys1723, and 1745-1746 (FS). The active-site For beta-ketoacyl reductase 1 activity is Tyr1760. One can recognise a Carrier 2 domain in the interval 1886–1961 (EALFELVRSH…TLAAHLAAEL (76 aa)). O-(pantetheine 4'-phosphoryl)serine is present on Ser1921. The Ketosynthase family 3 (KS3) 2 domain occupies 1979–2402 (DEPIAIVGMA…GTNAHVIIAE (424 aa)). The active-site Acyl-thioester intermediate; for beta-ketoacyl synthase 2 activity is Cys2148. Active-site for beta-ketoacyl synthase 2 activity residues include His2283 and His2323. The tract at residues 2508–2827 (VFVFPGQGAQ…LADAHTRGVA (320 aa)) is acyltransferase 3. Ser2598 (acyl-ester intermediate; for acyltransferase 3 activity) is an active-site residue. The interval 3057–3233 (GTILVTGGTA…ATSVAWGLWA (177 aa)) is beta-ketoacyl reductase 2. NADP(+) contacts are provided by residues 3065-3068 (TAGL), 3088-3091 (SRRG), 3117-3118 (DV), Lys3168, and 3188-3189 (FS). Tyr3203 acts as the For beta-ketoacyl reductase 2 activity in catalysis. One can recognise a Carrier 3 domain in the interval 3329-3407 (ERTAELVRLV…AVAGFLDAEL (79 aa)). O-(pantetheine 4'-phosphoryl)serine is present on Ser3367. Positions 3456 to 3491 (QAADASGTGANPSGDDLGEAGVDELLEALGRELDGD) are disordered. Positions 3471 to 3481 (DLGEAGVDELL) are enriched in acidic residues.

Homodimer. Erythronolide synthase is composed of EryAI, EryAII and EryAIII multimodular (2 modules) polypeptides each coding for a functional synthase subunit which participates in 2 of the six FAS-like elongation steps required for formation of the polyketide. Module 1, 2, 3, 4, 5, and 6 participating in biosynthesis steps 1, 2, 3, 4, 5, and 6, respectively. Pantetheine 4'-phosphate serves as cofactor.

The enzyme catalyses 6 (S)-methylmalonyl-CoA + propanoyl-CoA + 6 NADPH + 12 H(+) = 6-deoxyerythronolide B + 6 CO2 + 6 NADP(+) + 7 CoA + H2O. It functions in the pathway antibiotic biosynthesis; erythromycin biosynthesis. Functionally, involved in the biosynthesis of antibiotic erythromycin via the biosynthesis of its aglycone precursor, 6-deoxyerythronolide B (6-dEB). This is Erythronolide synthase EryA1 (eryA) from Saccharopolyspora erythraea (Streptomyces erythraeus).